A 423-amino-acid polypeptide reads, in one-letter code: UPF0597 protein Emin_0811 (423 aa).

The protein belongs to the UPF0597 family.

This Elusimicrobium minutum (strain Pei191) protein is UPF0597 protein Emin_0811.